The primary structure comprises 568 residues: Arginine--tRNA ligase (568 aa).

A 'HIGH' region motif is present at residues 129–139; the sequence is ANPTGPLHIGH.

It belongs to the class-I aminoacyl-tRNA synthetase family. In terms of assembly, monomer.

It is found in the cytoplasm. The catalysed reaction is tRNA(Arg) + L-arginine + ATP = L-arginyl-tRNA(Arg) + AMP + diphosphate. The chain is Arginine--tRNA ligase from Wolbachia pipientis wMel.